The following is a 156-amino-acid chain: Putative F-box protein R637 (156 aa).

Residues H4–K51 form the F-box domain.

This is Putative F-box protein R637 from Acanthamoeba polyphaga mimivirus (APMV).